The sequence spans 225 residues: Uracil-DNA glycosylase (225 aa).

The active-site Proton acceptor is the aspartate 65.

It belongs to the uracil-DNA glycosylase (UDG) superfamily. UNG family.

The protein localises to the cytoplasm. It catalyses the reaction Hydrolyzes single-stranded DNA or mismatched double-stranded DNA and polynucleotides, releasing free uracil.. Functionally, excises uracil residues from the DNA which can arise as a result of misincorporation of dUMP residues by DNA polymerase or due to deamination of cytosine. In Bacillus cereus (strain AH187), this protein is Uracil-DNA glycosylase.